Here is a 284-residue protein sequence, read N- to C-terminus: 4-diphosphocytidyl-2-C-methyl-D-erythritol kinase (284 aa).

Lys-9 is a catalytic residue. Residue 90 to 100 (PLVSGLGGDSS) participates in ATP binding. Residue Asp-132 is part of the active site.

Belongs to the GHMP kinase family. IspE subfamily.

It carries out the reaction 4-CDP-2-C-methyl-D-erythritol + ATP = 4-CDP-2-C-methyl-D-erythritol 2-phosphate + ADP + H(+). It functions in the pathway isoprenoid biosynthesis; isopentenyl diphosphate biosynthesis via DXP pathway; isopentenyl diphosphate from 1-deoxy-D-xylulose 5-phosphate: step 3/6. Its function is as follows. Catalyzes the phosphorylation of the position 2 hydroxy group of 4-diphosphocytidyl-2C-methyl-D-erythritol. This chain is 4-diphosphocytidyl-2-C-methyl-D-erythritol kinase, found in Dehalococcoides mccartyi (strain ATCC BAA-2266 / KCTC 15142 / 195) (Dehalococcoides ethenogenes (strain 195)).